A 253-amino-acid chain; its full sequence is MAIEKKPAGARGSRGSRTVKTLPNGKPDPASLSDRQRRILEVIRDAVVLRGYPPSIREIGDAAGLQSTSSVAYQLKELEKKGFLRRDPNKPRAVDVRHLPETESRSSKAATQAKSKAPQAGAHDPELAGQTSFVPVVGKIAAGSPITAEQNIEEYYPLPAEIVGDGDLFMLQVVGESMRDAGILTGDWVVVRSQPVAEQGEFVAAMIDGEATVKEFHKDSSGIWLLPHNDTFAPIPAENAEIMGKVVSVMRKL.

A disordered region spans residues 1-34 (MAIEKKPAGARGSRGSRTVKTLPNGKPDPASLSD). Residues 56–76 (IREIGDAAGLQSTSSVAYQLK) constitute a DNA-binding region (H-T-H motif). A compositionally biased stretch (basic and acidic residues) spans 82–106 (GFLRRDPNKPRAVDVRHLPETESRS). Positions 82–127 (GFLRRDPNKPRAVDVRHLPETESRSSKAATQAKSKAPQAGAHDPEL) are disordered. Over residues 107-120 (SKAATQAKSKAPQA) the composition is skewed to low complexity. Active-site for autocatalytic cleavage activity residues include Ser177 and Lys214.

It belongs to the peptidase S24 family. Homodimer.

The enzyme catalyses Hydrolysis of Ala-|-Gly bond in repressor LexA.. Represses a number of genes involved in the response to DNA damage (SOS response), including recA and lexA. In the presence of single-stranded DNA, RecA interacts with LexA causing an autocatalytic cleavage which disrupts the DNA-binding part of LexA, leading to derepression of the SOS regulon and eventually DNA repair. The sequence is that of LexA repressor from Corynebacterium glutamicum (strain R).